A 578-amino-acid polypeptide reads, in one-letter code: A-type ATP synthase subunit A (578 aa).

228 to 235 (GPFGSGKT) lines the ATP pocket.

This sequence belongs to the ATPase alpha/beta chains family. In terms of assembly, has multiple subunits with at least A(3), B(3), C, D, E, F, H, I and proteolipid K(x).

It is found in the cell membrane. It catalyses the reaction ATP + H2O + 4 H(+)(in) = ADP + phosphate + 5 H(+)(out). In terms of biological role, produces ATP from ADP in the presence of a proton gradient across the membrane. The archaeal alpha chain is a catalytic subunit. Functionally, component of the A-type ATP synthase that produces ATP from ADP in the presence of a proton gradient across the membrane. The A chain is the catalytic subunit. In Methanosarcina barkeri, this protein is A-type ATP synthase subunit A.